Consider the following 355-residue polypeptide: 3-dehydroquinate synthase (355 aa).

Residues 71 to 76, 105 to 109, 129 to 130, Lys142, and Lys151 each bind NAD(+); these read EGEERK, GVVGD, and TS. 3 residues coordinate Zn(2+): Glu184, His246, and His263.

It belongs to the sugar phosphate cyclases superfamily. Dehydroquinate synthase family. The cofactor is Co(2+). Zn(2+) serves as cofactor. It depends on NAD(+) as a cofactor.

Its subcellular location is the cytoplasm. The catalysed reaction is 7-phospho-2-dehydro-3-deoxy-D-arabino-heptonate = 3-dehydroquinate + phosphate. Its pathway is metabolic intermediate biosynthesis; chorismate biosynthesis; chorismate from D-erythrose 4-phosphate and phosphoenolpyruvate: step 2/7. Functionally, catalyzes the conversion of 3-deoxy-D-arabino-heptulosonate 7-phosphate (DAHP) to dehydroquinate (DHQ). The polypeptide is 3-dehydroquinate synthase (Streptococcus pneumoniae (strain Hungary19A-6)).